Reading from the N-terminus, the 229-residue chain is MSHGDSNPAAVPHAADDIQGDDRWMSQHNRFVSDCKDKEPDVLFVGDSMVQLLQQYEIWRELFSPLHALNFWIGGDTTGHVLWRLKNGELENIKPKVIVVWVGTNNYGNTAEEVAGGIEAIVRLINTQQPQAKVIVLGLLPRGEKPNPLRQKNAKVNHLLKASLPKLPNVQLLDVDAGFVHSDGTISYHDMFDFLHLTGGAYAKICKPLHELIMQLLEETPEEKRAALA.

Catalysis depends on residues Ser48, Asp193, and His196.

Belongs to the 'GDSL' lipolytic enzyme family. Platelet-activating factor acetylhydrolase IB beta/gamma subunits subfamily. Forms a catalytic dimer which is either homodimer (alpha2/alpha2 homodimer) or heterodimer with PAFAH1B3 (alpha2/alpha1 heterodimer). Component of the cytosolic (PAF-AH (I)) heterotetrameric enzyme, which is composed of PAFAH1B1 (beta), PAFAH1B2 (alpha2) and PAFAH1B3 (alpha1) subunits. The catalytic activity of the enzyme resides in the alpha1 (PAFAH1B3) and alpha2 (PAFAH1B2) subunits, whereas the beta subunit (PAFAH1B1) has regulatory activity. Trimer formation is not essential for the catalytic activity.

Its subcellular location is the cytoplasm. It catalyses the reaction a 1-O-alkyl-2-acetyl-sn-glycero-3-phosphocholine + H2O = a 1-O-alkyl-sn-glycero-3-phosphocholine + acetate + H(+). The enzyme catalyses 1-O-hexadecyl-2-acetyl-sn-glycero-3-phosphocholine + H2O = 1-O-hexadecyl-sn-glycero-3-phosphocholine + acetate + H(+). The catalysed reaction is 1-O-hexadecyl-2-acetyl-sn-glycero-3-phosphate + H2O = 1-O-hexadecyl-sn-glycero-3-phosphate + acetate + H(+). It carries out the reaction 1-O-hexadecyl-2-acetyl-sn-glycero-3-phosphoethanolamine + H2O = 1-O-hexadecyl-sn-glycero-3-phosphoethanolamine + acetate + H(+). Functionally, alpha2 catalytic subunit of the cytosolic type I platelet-activating factor (PAF) acetylhydrolase (PAF-AH (I)) heterotetrameric enzyme that catalyzes the hydrolyze of the acetyl group at the sn-2 position of PAF and its analogs and modulates the action of PAF. The chain is Platelet-activating factor acetylhydrolase IB subunit alpha2 (PAFAH1B2) from Gallus gallus (Chicken).